The following is a 569-amino-acid chain: Proton-coupled zinc antiporter SLC30A9, mitochondrial (569 aa).

Residues 1 to 68 (MLPGLAAAAA…IGTLSQVKLY (68 aa)) constitute a mitochondrion transit peptide. Transmembrane regions (helical) follow at residues 240–260 (VVMV…LAWI), 315–335 (GVGI…MGLL), 343–363 (LLWA…TLLV), 393–413 (VILL…TCMG), and 425–445 (SLGS…LIYT). Positions 463–467 (LTELL) match the LXXLL motif motif.

Belongs to the cation diffusion facilitator (CDF) transporter (TC 2.A.4) family. SLC30A subfamily. Interacts with GRIP1, ESR1, AR and CTNNB1.

The protein localises to the mitochondrion membrane. It is found in the nucleus. The protein resides in the endoplasmic reticulum. The enzyme catalyses Zn(2+)(in) + 2 H(+)(out) = Zn(2+)(out) + 2 H(+)(in). Functionally, mitochondrial proton-coupled zinc ion antiporter mediating the export of zinc from the mitochondria and involved in zinc homeostasis, zinc mobilization as well as mitochondrial morphology and health. In nucleus, functions as a secondary coactivator for nuclear receptors by cooperating with p160 coactivators subtypes. Plays a role in transcriptional activation of Wnt-responsive genes. The sequence is that of Proton-coupled zinc antiporter SLC30A9, mitochondrial (SLC30A9) from Pongo abelii (Sumatran orangutan).